The following is a 112-amino-acid chain: MNATILVKIITPLSIALEKQAKMVTMSGEEGMFGVLPSHVPMIVSLKAGLVQVYIDDMHKSENTYLISGGVTEVTANYINIATETAINVTNLSEVEIATKLLDLQKTLSDQH.

This sequence belongs to the ATPase epsilon chain family. F-type ATPases have 2 components, CF(1) - the catalytic core - and CF(0) - the membrane proton channel. CF(1) has five subunits: alpha(3), beta(3), gamma(1), delta(1), epsilon(1). CF(0) has three main subunits: a, b and c.

Its subcellular location is the cell inner membrane. In terms of biological role, produces ATP from ADP in the presence of a proton gradient across the membrane. The protein is ATP synthase epsilon chain (atpC) of Rickettsia conorii (strain ATCC VR-613 / Malish 7).